The following is a 370-amino-acid chain: Glucan endo-1,3-beta-glucosidase (370 aa).

Residues 1–32 (MASFFARTRRFSLVSLFLLELFTINLIPTTDA) form the signal peptide. Residue Gln33 is modified to Pyrrolidone carboxylic acid. Glu127 acts as the Proton donor in catalysis. Glu272 serves as the catalytic Nucleophile. The propeptide at 348-370 (GERRDGEIVEGDFNGTVSLKSDM) is removed in mature form. Asn361 carries N-linked (GlcNAc...) asparagine glycosylation.

This sequence belongs to the glycosyl hydrolase 17 family. Constitutively expressed in seedling roots.

It catalyses the reaction Hydrolysis of (1-&gt;3)-beta-D-glucosidic linkages in (1-&gt;3)-beta-D-glucans.. Its function is as follows. Implicated in the defense of plants against pathogens. This chain is Glucan endo-1,3-beta-glucosidase, found in Pisum sativum (Garden pea).